The primary structure comprises 337 residues: MEKSWMLWSFIERWLLALASWSWALCRISLLPLIVTFHLYGGIVLLLLIFVSIAGILYKFQDVLLYFPEQPSSSRLYVPMPTGIPHENIFIRTKDGVRLNLILVRYTGDNSPYCPTIIYFHGNAGNIGHRLPNALLMLVNLRVNLVLVDYRGYGKSEGEASEEGLYLDSEAVLDYVMTRPDLDKTKVFLFGRSLGGAVAIHLASENSHRISAIMVENTFLSIPHMASTLFSFFPMRYLPLWCYKNKFLSYRKISQCRMPSLFISGLSDQLIPPVMMKQLYELSPSRTKRLAIFPDGTHNDTWQCQGYFTALEQFIKEVIKSHSPEDMTKTSSNVTII.

A helical; Signal-anchor for type II membrane protein transmembrane segment spans residues 37-57 (FHLYGGIVLLLLIFVSIAGIL). Catalysis depends on charge relay system residues S193, D268, and H298. N299 is a glycosylation site (N-linked (GlcNAc...) asparagine).

The protein belongs to the serine esterase family.

The protein resides in the membrane. The protein is Protein ABHD13 of Mus musculus (Mouse).